The following is a 216-amino-acid chain: Flavin prenyltransferase UbiX (216 aa).

FMN is bound by residues Gly-9–Ser-11, Ser-35, and Arg-144. 2 residues coordinate dimethylallyl phosphate: Tyr-174 and Arg-190.

This sequence belongs to the UbiX/PAD1 family.

It catalyses the reaction dimethylallyl phosphate + FMNH2 = prenylated FMNH2 + phosphate. Its function is as follows. Flavin prenyltransferase that catalyzes the synthesis of the prenylated FMN cofactor (prenyl-FMN) for 4-hydroxy-3-polyprenylbenzoic acid decarboxylase UbiD. The prenyltransferase is metal-independent and links a dimethylallyl moiety from dimethylallyl monophosphate (DMAP) to the flavin N5 and C6 atoms of FMN. The protein is Flavin prenyltransferase UbiX of Streptomyces coelicolor (strain ATCC BAA-471 / A3(2) / M145).